Consider the following 504-residue polypeptide: Protein nucleotidyltransferase YdiU (504 aa).

ATP contacts are provided by G99, G101, R102, K122, D134, G135, R185, and R192. The active-site Proton acceptor is D261. Residues N262 and D271 each contribute to the Mg(2+) site. D271 contacts ATP.

It belongs to the SELO family. Mg(2+) is required as a cofactor. Requires Mn(2+) as cofactor.

The enzyme catalyses L-seryl-[protein] + ATP = 3-O-(5'-adenylyl)-L-seryl-[protein] + diphosphate. The catalysed reaction is L-threonyl-[protein] + ATP = 3-O-(5'-adenylyl)-L-threonyl-[protein] + diphosphate. It carries out the reaction L-tyrosyl-[protein] + ATP = O-(5'-adenylyl)-L-tyrosyl-[protein] + diphosphate. It catalyses the reaction L-histidyl-[protein] + UTP = N(tele)-(5'-uridylyl)-L-histidyl-[protein] + diphosphate. The enzyme catalyses L-seryl-[protein] + UTP = O-(5'-uridylyl)-L-seryl-[protein] + diphosphate. The catalysed reaction is L-tyrosyl-[protein] + UTP = O-(5'-uridylyl)-L-tyrosyl-[protein] + diphosphate. Functionally, nucleotidyltransferase involved in the post-translational modification of proteins. It can catalyze the addition of adenosine monophosphate (AMP) or uridine monophosphate (UMP) to a protein, resulting in modifications known as AMPylation and UMPylation. This chain is Protein nucleotidyltransferase YdiU, found in Methylococcus capsulatus (strain ATCC 33009 / NCIMB 11132 / Bath).